We begin with the raw amino-acid sequence, 199 residues long: Large ribosomal subunit protein eL13B (199 aa).

A phosphothreonine mark is found at T144 and T152.

The protein belongs to the eukaryotic ribosomal protein eL13 family. Component of the large ribosomal subunit (LSU). Mature yeast ribosomes consist of a small (40S) and a large (60S) subunit. The 40S small subunit contains 1 molecule of ribosomal RNA (18S rRNA) and 33 different proteins (encoded by 57 genes). The large 60S subunit contains 3 rRNA molecules (25S, 5.8S and 5S rRNA) and 46 different proteins (encoded by 81 genes).

Its subcellular location is the cytoplasm. Component of the ribosome, a large ribonucleoprotein complex responsible for the synthesis of proteins in the cell. The small ribosomal subunit (SSU) binds messenger RNAs (mRNAs) and translates the encoded message by selecting cognate aminoacyl-transfer RNA (tRNA) molecules. The large subunit (LSU) contains the ribosomal catalytic site termed the peptidyl transferase center (PTC), which catalyzes the formation of peptide bonds, thereby polymerizing the amino acids delivered by tRNAs into a polypeptide chain. The nascent polypeptides leave the ribosome through a tunnel in the LSU and interact with protein factors that function in enzymatic processing, targeting, and the membrane insertion of nascent chains at the exit of the ribosomal tunnel. This Saccharomyces cerevisiae (strain ATCC 204508 / S288c) (Baker's yeast) protein is Large ribosomal subunit protein eL13B.